The following is a 154-amino-acid chain: MAVDPNVKTLVENRRARFEYEILETYEAGIQLTGTEVKSIRAGKANLQDAFALFRDGEAWLHNLHVAPHGTASKVFNHDPTRRRKLLLHRREIDRLRGLVEQKGLTVVPLRLVLNRGWIKAHLGVARGKKLHDKRQAIKERETRREIQRELKGR.

This sequence belongs to the SmpB family.

The protein localises to the cytoplasm. Its function is as follows. Required for rescue of stalled ribosomes mediated by trans-translation. Binds to transfer-messenger RNA (tmRNA), required for stable association of tmRNA with ribosomes. tmRNA and SmpB together mimic tRNA shape, replacing the anticodon stem-loop with SmpB. tmRNA is encoded by the ssrA gene; the 2 termini fold to resemble tRNA(Ala) and it encodes a 'tag peptide', a short internal open reading frame. During trans-translation Ala-aminoacylated tmRNA acts like a tRNA, entering the A-site of stalled ribosomes, displacing the stalled mRNA. The ribosome then switches to translate the ORF on the tmRNA; the nascent peptide is terminated with the 'tag peptide' encoded by the tmRNA and targeted for degradation. The ribosome is freed to recommence translation, which seems to be the essential function of trans-translation. This is SsrA-binding protein from Synechococcus sp. (strain JA-3-3Ab) (Cyanobacteria bacterium Yellowstone A-Prime).